We begin with the raw amino-acid sequence, 298 residues long: CCR4-NOT transcription complex subunit 9 (298 aa).

The protein belongs to the CNOT9 family. Homodimer. Component of the CCR4-NOT complex.

It is found in the nucleus. The protein localises to the cytoplasm. The protein resides in the P-body. Component of the CCR4-NOT complex which is one of the major cellular mRNA deadenylases and is linked to various cellular processes including bulk mRNA degradation, miRNA-mediated repression, translational repression during translational initiation and general transcription regulation. Additional complex functions may be a consequence of its influence on mRNA expression. Involved in down-regulation of MYB- and JUN-dependent transcription. Enhances ligand-dependent transcriptional activity of nuclear hormone receptors. May play a role in cell differentiation. This chain is CCR4-NOT transcription complex subunit 9, found in Danio rerio (Zebrafish).